The sequence spans 934 residues: MKLKKRYLLLGSTLTVSAALILSACASSQLNKGVFFTSSSADLLKNNSVPLSMFNVSPTSSFFGNAYAGLTNYVATGTNRDDGVNVTDQIKEKLVLELALSVTGYKKTTHSGLKGRAQKNGSTDSSDGSSKNDYTKFNEWDAIGTIYRDSSKSITEDPNYHKITQEATRYEFTINTSLSWVDNAGREVKQNNQPVKLSSKDFERGFETYILSSNLGFNRNGYFIDLMGLDVEKTVGMDKTNGSSDGNGKGIEITDENYDVENYRSVDDNKFNVYLTSPFPFFLSMMSKEFFFPIPHTHPKVKALKLGKDSPLKYNQNNNRKILDQANTNFDGIYGGGVNAWKDTWSVGPYYVESFNQAQIVFKRNQIYDAIITPNLPKTRQENEKPIPAIVSYFQPGATPEVFYSSYIAGGLSASAVPYSQQQDARSRFNGTGDLRWLKIQKTAQSAQVTYSGKPYVANDSTVQLNANITETEAKFLYNSESEEALTIRAGINGLINWKNLAIIDLPNSGDVNYSTVPFGIFKEKPANGTSSGTNTDGIENDYYYKINNNQRLGLIPEQTGTFQKDKNVLDTATVKLSYYSSTKTNGAQVRTASTSGSSSQTSQVSSKQVSVTKQSFISALKKVGFTGNNPLHFNIKLGNASLSSNQVDYYNALKQALTELGNDNGENLIIPEIILGDAQGPTRNEWYIGLSSVLGFSYWSPDYDGVGTWLDAATQLNSEGIGEVITYNSGSHIVRTLLLAASQNNVFNQIENKLQNNTTTNGKDWCSCITSADLFKDDPYVIKNFGTNGNNGTSASLAFTKKALSLLKFLVDNKVLKADKVKEAIKDPDKYLSKRSKIDDNKPANVSDIHIGYELKDLYDNAAQLNRFNSIWAEQDTDNAKFLITVVDSYFPVLPVSAPGLNETIPSLLKPWFSLRNAPSGIATMRDSGYIDE.

The first 24 residues, 1 to 24 (MKLKKRYLLLGSTLTVSAALILSA), serve as a signal peptide directing secretion. Cys-25 carries the N-palmitoyl cysteine lipid modification. Cys-25 carries S-diacylglycerol cysteine lipidation. Residues 111–131 (SGLKGRAQKNGSTDSSDGSSK) form a disordered region. Polar residues predominate over residues 119–131 (KNGSTDSSDGSSK).

The protein localises to the cell membrane. This is an uncharacterized protein from Mycoplasma genitalium (strain ATCC 33530 / DSM 19775 / NCTC 10195 / G37) (Mycoplasmoides genitalium).